Reading from the N-terminus, the 289-residue chain is Serine/threonine-protein phosphatase Pgam5, mitochondrial (289 aa).

Residues 7–23 (FACGTGAGLLTFYLTKL) traverse the membrane as a helical segment.

The protein belongs to the phosphoglycerate mutase family. BPG-dependent PGAM subfamily. As to quaternary structure, interacts with Pk92B/ASK1.

The protein resides in the mitochondrion outer membrane. The catalysed reaction is O-phospho-L-seryl-[protein] + H2O = L-seryl-[protein] + phosphate. It catalyses the reaction O-phospho-L-threonyl-[protein] + H2O = L-threonyl-[protein] + phosphate. Displays phosphatase activity for serine/threonine residues, and dephosphorylates and activates Pk92B kinase. Has apparently no phosphoglycerate mutase activity. The polypeptide is Serine/threonine-protein phosphatase Pgam5, mitochondrial (Drosophila persimilis (Fruit fly)).